The primary structure comprises 262 residues: Regulatory protein RecX (262 aa).

The protein belongs to the RecX family.

Its subcellular location is the cytoplasm. Functionally, modulates RecA activity. This chain is Regulatory protein RecX, found in Photobacterium profundum (strain SS9).